A 231-amino-acid polypeptide reads, in one-letter code: Dephospho-CoA kinase domain-containing protein (231 aa).

The region spanning 3–207 is the DPCK domain; it reads LVGLTGGIAS…HSLEYLPLRL (205 aa). 8–15 provides a ligand contact to ATP; that stretch reads GGIASGKS.

This sequence belongs to the CoaE family.

The polypeptide is Dephospho-CoA kinase domain-containing protein (DCAKD) (Bos taurus (Bovine)).